Here is a 147-residue protein sequence, read N- to C-terminus: Hemoglobin subunit epsilon (147 aa).

The Globin domain maps to 3–147 (HFTAEEKAAV…VAIALAHKYH (145 aa)). A phosphoserine mark is found at S14 and S51. Residues H64 and H93 each contribute to the heme b site.

Belongs to the globin family. Heterotetramer of two alpha chains and two epsilon chains in early embryonic hemoglobin Gower-2; two zeta chains and two epsilon chains in early embryonic hemoglobin Gower-1. As to expression, red blood cells.

Functionally, the epsilon chain is a beta-type chain of early mammalian embryonic hemoglobin. This chain is Hemoglobin subunit epsilon (HBE1), found in Pongo pygmaeus (Bornean orangutan).